The primary structure comprises 369 residues: MKSGRFIGVMSGTSLDGVDVVLATIDEHRVAQLASLSWPIPVSLKQAVLDICQGQQLTLSQFGQLDTQLGRLFADAVNALLKEQNLQARDIVAIGCHGQTVWHEPTGVAPHTLQIGDNNQIVARTGITVVGDFRRRDIALGGQGAPLVPAFHHALLAHPTERRMVLNIGGIANLSLLIPGQPVGGYDTGPGNMLMDAWIWRQAGKPYDKDAEWARAGKVILPLLQNMLSDPYFSQPAPKSTGREYFNYGWLERHLRHFPGVDPRDVQATLAELTAVTISEQVLLSGGCERLMVCGGGGRNPLLMARLAALLPGTEVTTTDAVGISGDDMEALAFAWLAWRTLAGLPGNLPSVTGASQETVLGAIFPANP.

12-19 is a binding site for ATP; that stretch reads GTSLDGVD.

This sequence belongs to the anhydro-N-acetylmuramic acid kinase family.

The catalysed reaction is 1,6-anhydro-N-acetyl-beta-muramate + ATP + H2O = N-acetyl-D-muramate 6-phosphate + ADP + H(+). It participates in amino-sugar metabolism; 1,6-anhydro-N-acetylmuramate degradation. It functions in the pathway cell wall biogenesis; peptidoglycan recycling. In terms of biological role, catalyzes the specific phosphorylation of 1,6-anhydro-N-acetylmuramic acid (anhMurNAc) with the simultaneous cleavage of the 1,6-anhydro ring, generating MurNAc-6-P. Is required for the utilization of anhMurNAc either imported from the medium or derived from its own cell wall murein, and thus plays a role in cell wall recycling. This chain is Anhydro-N-acetylmuramic acid kinase, found in Escherichia coli O1:K1 / APEC.